Consider the following 380-residue polypeptide: Dynactin subunit 2 (380 aa).

The disordered stretch occupies residues 1-40 (MADPKFQNLPGIAYDQPDVYETPDDPETDTSDYYEEEPEN). The span at 21-40 (ETPDDPETDTSDYYEEEPEN) shows a compositional bias: acidic residues. Coiled coils occupy residues 100–135 (VQKCQRLQIEMNELLNEVAALQVDRKIADEEKQSYD) and 353–377 (ETFAQNLETITNKVAKVEQRVTAIS).

It belongs to the dynactin subunit 2 family. In terms of assembly, subunit of dynactin, a multiprotein complex associated with dynein.

The protein resides in the cytoplasm. It is found in the cytoskeleton. Its subcellular location is the membrane. In terms of biological role, modulates cytoplasmic dynein binding to an organelle, and plays a role in prometaphase chromosome alignment and spindle organization during mitosis. May play a role in synapse formation during brain development. This chain is Dynactin subunit 2, found in Drosophila pseudoobscura pseudoobscura (Fruit fly).